The primary structure comprises 728 residues: Bacteriophytochrome (728 aa).

Cysteine 12 contributes to the a tetrapyrrole binding site. Residues 17–495 form a chromophore binding domain region; sequence IHVPGAIQPH…RLDLMELCLN (479 aa). In terms of domain architecture, GAF spans 139 to 303; sequence DTASLLSNVT…IFSQVCSAIV (165 aa). The Histidine kinase domain occupies 510–721; the sequence is VLGHDLRNPL…TFCLRLPVRQ (212 aa). Histidine 513 is subject to Phosphohistidine; by autocatalysis.

It in the N-terminal section; belongs to the phytochrome family. Contains one covalently linked tetrapyrrole chromophore.

The catalysed reaction is ATP + protein L-histidine = ADP + protein N-phospho-L-histidine.. Its function is as follows. Photoreceptor which exists in two forms that are reversibly interconvertible by light: the R form that absorbs maximally in the red region of the spectrum and the FR form that absorbs maximally in the far-red region. This is Bacteriophytochrome (bphP) from Pseudomonas aeruginosa (strain ATCC 15692 / DSM 22644 / CIP 104116 / JCM 14847 / LMG 12228 / 1C / PRS 101 / PAO1).